The sequence spans 579 residues: MFS-type transporter sphD (579 aa).

Positions 17-62 (SAFAVRAEPDSEPVSEKQGTAETDAETGAGGTEVPAERNGEDDVER) are disordered. The span at 51 to 62 (PAERNGEDDVER) shows a compositional bias: basic and acidic residues. Transmembrane regions (helical) follow at residues 73–93 (AFIGLAASMFVFQVDATALGI), 110–130 (FWANLSYTLCGLVMQPVWASI), 138–158 (PPLYVSMALFFIGSIVFAVAQ), 168–188 (VLQGFGGGGIDVLAEVILADM), 200–220 (LMAIPMAIGNIMGPSVGALFA), 227–247 (WIGWVNLPLLGIGTPLVFFFL), 267–287 (WIGMVLVVVGITIFVLPLSWA), and 294–314 (GAWQTLVPLFLGVAVLVIFAF). Asparagine 335 is a glycosylation site (N-linked (GlcNAc...) asparagine). 6 consecutive transmembrane segments (helical) span residues 338–358 (LVGGFLHGAVLVSLLQYLPLI), 367–391 (AILSAVSLLPTVIISVVVAAISMML), 398–419 (YVWILRLAWVILTLGTGLLALF), 429–449 (LGLPILWGAGVALLRLNLLPM), 460–480 (GLAIGQFLTIRMFGGLVGLTI), and 541–561 (FQTIFYTMTGLSGLGLVTSLF).

Belongs to the major facilitator superfamily.

Its subcellular location is the membrane. Functionally, MFS-type transporter; part of the gene cluster that mediates the biosynthesis of sphingofungins, bioactive molecules acting as sphingolipid inhibitors via inhibiting serine palmitoyl transferase (SPT). This chain is MFS-type transporter sphD, found in Aspergillus fumigatus (strain CBS 144.89 / FGSC A1163 / CEA10) (Neosartorya fumigata).